We begin with the raw amino-acid sequence, 341 residues long: Inositol monophosphatase 3 (341 aa).

The helical transmembrane segment at 11 to 31 threads the bilayer; the sequence is LGIAVFCLLGVGVIYHLYAGV. Residues Glu117, Asp157, Leu159, Asp160, and Asp283 each coordinate Mg(2+). Glu117 is a substrate binding site. Residues 159–162 and Asp283 each bind substrate; that span reads LDAT.

This sequence belongs to the inositol monophosphatase superfamily. It depends on Mg(2+) as a cofactor.

The protein resides in the membrane. The enzyme catalyses a myo-inositol phosphate + H2O = myo-inositol + phosphate. The protein operates within polyol metabolism; myo-inositol biosynthesis; myo-inositol from D-glucose 6-phosphate: step 2/2. This is Inositol monophosphatase 3 (bpnt2) from Danio rerio (Zebrafish).